Reading from the N-terminus, the 356-residue chain is Protein pelota homolog (356 aa).

It belongs to the eukaryotic release factor 1 family. Pelota subfamily. Monomer. It depends on a divalent metal cation as a cofactor.

Its subcellular location is the cytoplasm. Functionally, may function in recognizing stalled ribosomes, interact with stem-loop structures in stalled mRNA molecules, and effect endonucleolytic cleavage of the mRNA. May play a role in the release non-functional ribosomes and degradation of damaged mRNAs. Has endoribonuclease activity. The sequence is that of Protein pelota homolog from Aeropyrum pernix (strain ATCC 700893 / DSM 11879 / JCM 9820 / NBRC 100138 / K1).